Here is a 297-residue protein sequence, read N- to C-terminus: Ribonuclease H2 subunit A (297 aa).

The region spanning 21–248 is the RNase H type-2 domain; it reads PCVLGIDEAG…ASTIVEKRCV (228 aa). A divalent metal cation is bound by residues aspartate 27, glutamate 28, and aspartate 138.

The protein belongs to the RNase HII family. Eukaryotic subfamily. Requires Mn(2+) as cofactor. Mg(2+) serves as cofactor.

It carries out the reaction Endonucleolytic cleavage to 5'-phosphomonoester.. Functionally, catalytic subunit of RNase HII, an endonuclease that specifically degrades the RNA of RNA:DNA hybrids. Participates in DNA replication, possibly by mediating the removal of lagging-strand Okazaki fragment RNA primers during DNA replication. Mediates the excision of single ribonucleotides from DNA:RNA duplexes. In Caenorhabditis elegans, this protein is Ribonuclease H2 subunit A (rnh-2).